The following is a 290-amino-acid chain: Transcription factor HES-1 (290 aa).

A disordered region spans residues 1-47 (MPADTGMEKPTASPIAGAPASASHTPDKPRSASEHRKSSKPIMEKRR). Positions 10–23 (PTASPIAGAPASAS) are enriched in low complexity. The span at 25–36 (TPDKPRSASEHR) shows a compositional bias: basic and acidic residues. Residues 35 to 92 (HRKSSKPIMEKRRRARINESLGQLKMLILDALKKDSSRHSKLEKADILEMTVKHLRNL) enclose the bHLH domain. The region spanning 111-144 (YRAGFNECMNEVTRFLSTCEGVNADVRARLLGHL) is the Orange domain. Positions 287-290 (WRPW) match the WRPW motif motif.

As to quaternary structure, transcription repression requires formation of a complex with a corepressor protein of the Groucho/TLE family.

It is found in the nucleus. In terms of biological role, transcriptional repressor of genes that require a bHLH protein for their transcription. May act as a negative regulator of myogenesis by inhibiting the functions of MYOD1 and ASH1. In Gallus gallus (Chicken), this protein is Transcription factor HES-1 (HES1).